The primary structure comprises 168 residues: tRNA-splicing endonuclease subunit Sen15 (168 aa).

The segment at 1–32 is disordered; that stretch reads MEERSDSEPTPGCSGPGPAPVRDGGGAHTWAP. Phosphoserine is present on residues S7 and S165.

It belongs to the SEN15 family. In terms of assembly, homodimer. tRNA splicing endonuclease is a heterotetramer composed of TSEN2, TSEN15, TSEN34/LENG5 and TSEN54. tRNA splicing endonuclease complex also contains proteins of the pre-mRNA 3' end processing machinery such as CLP1, CPSF1, CPSF4 and CSTF2.

The protein resides in the nucleus. It is found in the nucleolus. Functionally, non-catalytic subunit of the tRNA-splicing endonuclease complex, a complex responsible for identification and cleavage of the splice sites in pre-tRNA. It cleaves pre-tRNA at the 5' and 3' splice sites to release the intron. The products are an intron and two tRNA half-molecules bearing 2',3' cyclic phosphate and 5'-OH termini. There are no conserved sequences at the splice sites, but the intron is invariably located at the same site in the gene, placing the splice sites an invariant distance from the constant structural features of the tRNA body. The tRNA splicing endonuclease is also involved in mRNA processing via its association with pre-mRNA 3'-end processing factors, establishing a link between pre-tRNA splicing and pre-mRNA 3'-end formation, suggesting that the endonuclease subunits function in multiple RNA-processing events. In Mus musculus (Mouse), this protein is tRNA-splicing endonuclease subunit Sen15 (Tsen15).